The following is a 206-amino-acid chain: ATP-dependent Clp protease proteolytic subunit 1 (206 aa).

Ser100 (nucleophile) is an active-site residue. His125 is a catalytic residue.

The protein belongs to the peptidase S14 family. Fourteen ClpP subunits assemble into 2 heptameric rings which stack back to back to give a disk-like structure with a central cavity, resembling the structure of eukaryotic proteasomes.

It localises to the cytoplasm. It catalyses the reaction Hydrolysis of proteins to small peptides in the presence of ATP and magnesium. alpha-casein is the usual test substrate. In the absence of ATP, only oligopeptides shorter than five residues are hydrolyzed (such as succinyl-Leu-Tyr-|-NHMec, and Leu-Tyr-Leu-|-Tyr-Trp, in which cleavage of the -Tyr-|-Leu- and -Tyr-|-Trp bonds also occurs).. Functionally, cleaves peptides in various proteins in a process that requires ATP hydrolysis. Has a chymotrypsin-like activity. Plays a major role in the degradation of misfolded proteins. The protein is ATP-dependent Clp protease proteolytic subunit 1 of Myxococcus xanthus (strain DK1622).